Reading from the N-terminus, the 617-residue chain is Guanylate cyclase soluble subunit beta-2 (617 aa).

His26 is a binding site for heme. In terms of domain architecture, Guanylate cyclase spans 391-519 (TILFSDVVTF…DTVNTASRME (129 aa)). A compositionally biased stretch (basic and acidic residues) spans 577–586 (RSKTPVDHKG). Residues 577–605 (RSKTPVDHKGSTQKASLPTTKLQGSVQPS) form a disordered region. Residues 588 to 604 (TQKASLPTTKLQGSVQP) are compositionally biased toward polar residues.

It belongs to the adenylyl cyclase class-4/guanylyl cyclase family. In terms of assembly, heterodimer of an alpha and a beta chain. Heme serves as cofactor. As to expression, expressed in gastric signet ring cell carcinoma, but not in the normal stomach.

It localises to the cytoplasm. It catalyses the reaction GTP = 3',5'-cyclic GMP + diphosphate. With respect to regulation, activated by nitric oxide in the presence of magnesium or manganese ions. The polypeptide is Guanylate cyclase soluble subunit beta-2 (GUCY1B2) (Homo sapiens (Human)).